A 104-amino-acid chain; its full sequence is Fluoride-specific ion channel FluC 2 (104 aa).

Helical transmembrane passes span Ile22 to Val42, Leu48 to Ala68, and Met82 to Leu102. Na(+) is bound by residues Gly59 and Ser62.

It belongs to the fluoride channel Fluc/FEX (TC 1.A.43) family.

The protein localises to the cell membrane. The catalysed reaction is fluoride(in) = fluoride(out). With respect to regulation, na(+) is not transported, but it plays an essential structural role and its presence is essential for fluoride channel function. Its function is as follows. Fluoride-specific ion channel. Important for reducing fluoride concentration in the cell, thus reducing its toxicity. This is Fluoride-specific ion channel FluC 2 from Corynebacterium diphtheriae (strain ATCC 700971 / NCTC 13129 / Biotype gravis).